An 858-amino-acid chain; its full sequence is MSAHAAPSPEALSRRAEFKAAKTEMLERFRHAANVASLMHALSKLTDDALKRVWDECGLPATLALVAVGGYGRGELAPYSDVDIVVLLPDAHDAALDARIERFIGMAWDLGLEIGSSVRTVAQCIEEASQDVTVQTSLLEARRIVGSTALFERFTVRYHEALDARAFFTAKVLEMRQRHAKFQDTPYSLEPNVKESPGGLRDLQTILWIARAAGFGSSWRELDTRGLITDREARELRRNEGFLKTLRARLHVIAGRRQDMLVFDLQTQAAESFGYQPTQAKRASEQLMRRYYWAAKAVTQLATILIQNIEAQLFPATSGITRVLSADRFVEKQGMLEIVDDGVFERHPDAILEAFLLYETTRGVKGLSARTLRALYNSREIMNNAWRRDPQNRATFMRILQQPEGITHAFRLMNQTSVLGRYLLNFRRIVGQMQHDLYHVYTVDQHILMVLRNIRRFAVAEHAHEYPFCSQLIGNFERPWALYVAALFHDIAKGRGGDHSTLGMADARRFCREHGIAGDDAALIVWLVQHHLTMSQVAQKQDTSDPEVIKRFAEVVGNERYLTALYLLTVADIRGTSPKVWNTWKGKLLEDLYRITLAVLGGANPDAHSELKSRQEQALALLRLETVPDDAHRALWDQLDVGFFLRHDAADIAWQTRVLYRHVNAETAIVRARPSPIGDALQVLVYVKDRPDLFAGICAYFDRNGLSVLDARVSTTRHGYALDNFIVTQTERDVRYRDIANLVEQQLATRLAETASLPEPSKGRLSRLSRTFPITPRVDLRADERGQYYILSVSANDRPGLLYSIARVLAEHRIGVHAARINTLGERVEDIFLLAGAGLSDNRLQIQLETELLRAIAV.

The interval 1-324 is uridylyltransferase; that stretch reads MSAHAAPSPE…PATSGITRVL (324 aa). The interval 325 to 681 is uridylyl-removing; sequence SADRFVEKQG…ARPSPIGDAL (357 aa). Residues 443–565 enclose the HD domain; it reads VDQHILMVLR…VGNERYLTAL (123 aa). 2 ACT domains span residues 682 to 763 and 790 to 858; these read QVLV…PSKG and ILSV…AIAV.

This sequence belongs to the GlnD family. Mg(2+) is required as a cofactor.

It catalyses the reaction [protein-PII]-L-tyrosine + UTP = [protein-PII]-uridylyl-L-tyrosine + diphosphate. The catalysed reaction is [protein-PII]-uridylyl-L-tyrosine + H2O = [protein-PII]-L-tyrosine + UMP + H(+). With respect to regulation, uridylyltransferase (UTase) activity is inhibited by glutamine, while glutamine activates uridylyl-removing (UR) activity. In terms of biological role, modifies, by uridylylation and deuridylylation, the PII regulatory proteins (GlnB and homologs), in response to the nitrogen status of the cell that GlnD senses through the glutamine level. Under low glutamine levels, catalyzes the conversion of the PII proteins and UTP to PII-UMP and PPi, while under higher glutamine levels, GlnD hydrolyzes PII-UMP to PII and UMP (deuridylylation). Thus, controls uridylylation state and activity of the PII proteins, and plays an important role in the regulation of nitrogen assimilation and metabolism. The polypeptide is Bifunctional uridylyltransferase/uridylyl-removing enzyme (Burkholderia orbicola (strain MC0-3)).